We begin with the raw amino-acid sequence, 435 residues long: Citrate synthase (435 aa).

Residues H311 and D370 contribute to the active site.

The protein belongs to the citrate synthase family. Homohexamer.

It carries out the reaction oxaloacetate + acetyl-CoA + H2O = citrate + CoA + H(+). The protein operates within carbohydrate metabolism; tricarboxylic acid cycle; isocitrate from oxaloacetate: step 1/2. This chain is Citrate synthase (gltA), found in Rickettsia africae (strain ESF-5).